A 137-amino-acid chain; its full sequence is Small ribosomal subunit protein uS9c (137 aa).

Belongs to the universal ribosomal protein uS9 family.

Its subcellular location is the plastid. The protein resides in the chloroplast. The polypeptide is Small ribosomal subunit protein uS9c (rps9) (Mesostigma viride (Green alga)).